We begin with the raw amino-acid sequence, 298 residues long: Glycine--tRNA ligase alpha subunit (298 aa).

This sequence belongs to the class-II aminoacyl-tRNA synthetase family. In terms of assembly, tetramer of two alpha and two beta subunits.

Its subcellular location is the cytoplasm. The enzyme catalyses tRNA(Gly) + glycine + ATP = glycyl-tRNA(Gly) + AMP + diphosphate. This is Glycine--tRNA ligase alpha subunit from Helicobacter acinonychis (strain Sheeba).